The following is a 170-amino-acid chain: Lipoprotein signal peptidase (170 aa).

Transmembrane regions (helical) follow at residues 12-32, 67-87, and 93-113; these read WYWV…WVLA, WQRW…TVWL, and SLWK…GNLI. Residues D123 and D141 contribute to the active site. Residues 137–157 traverse the membrane as a helical segment; it reads FNIADSAIFIGAVLIIWDSFF.

The protein belongs to the peptidase A8 family.

It is found in the cell inner membrane. The enzyme catalyses Release of signal peptides from bacterial membrane prolipoproteins. Hydrolyzes -Xaa-Yaa-Zaa-|-(S,diacylglyceryl)Cys-, in which Xaa is hydrophobic (preferably Leu), and Yaa (Ala or Ser) and Zaa (Gly or Ala) have small, neutral side chains.. It participates in protein modification; lipoprotein biosynthesis (signal peptide cleavage). Functionally, this protein specifically catalyzes the removal of signal peptides from prolipoproteins. This is Lipoprotein signal peptidase from Shewanella sp. (strain MR-4).